The following is a 445-amino-acid chain: C-terminal-binding protein 2 (445 aa).

Arg-22 is subject to Asymmetric dimethylarginine. Residues Ser-106, 186-191 (IGFGRT), Asp-210, 243-249 (CNLNEHN), 270-272 (AAR), and Asp-296 each bind NAD(+). The active site involves Arg-272. Glu-301 is a catalytic residue. His-321 functions as the Proton donor in the catalytic mechanism. 321 to 324 (HTAW) serves as a coordination point for NAD(+). Residues 414-445 (THNLPTVAHPSQAPSPNQPTKHGDNREHPNEQ) form a disordered region. Residue Ser-428 is modified to Phosphoserine; by HIPK2. Residues 434 to 445 (KHGDNREHPNEQ) are compositionally biased toward basic and acidic residues.

Belongs to the D-isomer specific 2-hydroxyacid dehydrogenase family. In terms of assembly, interacts with HIPK2, ZNF217 and PNN. Interacts with the transcription factors BKLF, delta EF1/AREB6/ZEB, EVI-1 and Friend of GATA (FOG) via the consensus motif P-X-[DNS]-L-[STVA]. Can form a complex with BKLF on a CACCC-box oligonucleotide. Can form homodimers or heterodimers of CTBP1 and CTBP2. Interacts with NRIP1 and WIZ. Interacts with PRDM16; represses white adipose tissue (WAT)-specific genes expression. Interacts with MCRIP1. In terms of processing, phosphorylation by HIPK2 on Ser-428 induces proteasomal degradation. In terms of tissue distribution, isoform 2 is specifically localized in synaptic ribbon (at protein level).

It is found in the nucleus. The protein localises to the synapse. In terms of biological role, corepressor targeting diverse transcription regulators. Functions in brown adipose tissue (BAT) differentiation. Isoform 2 probably acts as a scaffold for specialized synapses. This chain is C-terminal-binding protein 2 (Ctbp2), found in Rattus norvegicus (Rat).